Consider the following 346-residue polypeptide: 4-hydroxy-2-oxovalerate aldolase (346 aa).

The Pyruvate carboxyltransferase domain maps to 8-260; the sequence is VTLHDMSLRD…ETGIDLYKIM (253 aa). Residue 16–17 participates in substrate binding; sequence RD. Residue Asp17 participates in Mn(2+) binding. His20 serves as the catalytic Proton acceptor. Substrate-binding residues include Ser170 and His199. 2 residues coordinate Mn(2+): His199 and His201. Tyr290 is a binding site for substrate.

This sequence belongs to the 4-hydroxy-2-oxovalerate aldolase family.

It catalyses the reaction (S)-4-hydroxy-2-oxopentanoate = acetaldehyde + pyruvate. The protein is 4-hydroxy-2-oxovalerate aldolase (nahM) of Stutzerimonas stutzeri (Pseudomonas stutzeri).